Consider the following 627-residue polypeptide: uncharacterized protein (627 aa).

Disordered stretches follow at residues 441 to 466 and 608 to 627; these read EAVP…QGEN and DLRG…TEDR. Basic and acidic residues predominate over residues 615-627; sequence DYERGKGESTEDR.

This is an uncharacterized protein from Homo sapiens (Human).